Consider the following 180-residue polypeptide: NADH-quinone oxidoreductase subunit I (180 aa).

2 consecutive 4Fe-4S ferredoxin-type domains span residues 50-80 (LTRNIDGGERCVACNLCAVVCPVDCISLQKS) and 90-119 (KFFRINFSRCIFCGLCEEACPTAAIQLMPD). [4Fe-4S] cluster-binding residues include Cys-60, Cys-63, Cys-66, Cys-70, Cys-99, Cys-102, Cys-105, and Cys-109.

It belongs to the complex I 23 kDa subunit family. NDH-1 is composed of 13 different subunits. Subunits NuoA, H, J, K, L, M, N constitute the membrane sector of the complex. Requires [4Fe-4S] cluster as cofactor.

It is found in the cell membrane. The catalysed reaction is a quinone + NADH + 5 H(+)(in) = a quinol + NAD(+) + 4 H(+)(out). Functionally, NDH-1 shuttles electrons from NADH, via FMN and iron-sulfur (Fe-S) centers, to quinones in the respiratory chain. The immediate electron acceptor for the enzyme in this species is believed to be ubiquinone. Couples the redox reaction to proton translocation (for every two electrons transferred, four hydrogen ions are translocated across the cytoplasmic membrane), and thus conserves the redox energy in a proton gradient. The protein is NADH-quinone oxidoreductase subunit I of Buchnera aphidicola subsp. Schizaphis graminum (strain Sg).